A 774-amino-acid polypeptide reads, in one-letter code: Multiple C2 domain and transmembrane region protein 11 (774 aa).

The span at 1–12 shows a compositional bias: gly residues; that stretch reads MAVNGTGNGTGD. The segment at 1–30 is disordered; it reads MAVNGTGNGTGDGDFSLKETSPNIGNGGVN. 3 consecutive C2 domains span residues 9–145, 184–307, and 338–471; these read GTGD…PQWY, VTGE…SLWY, and LDES…THSY. Positions 62, 110, 112, and 118 each coordinate Ca(2+). The next 2 helical transmembrane spans lie at 608–628 and 722–742; these read LFVV…CFVF and FVSC…FLAF.

It belongs to the MCTP family. Ca(2+) serves as cofactor. As to expression, observed in flowers.

The protein localises to the endoplasmic reticulum membrane. May function as a signaling molecule by regulating the trafficking of other regulators. This Arabidopsis thaliana (Mouse-ear cress) protein is Multiple C2 domain and transmembrane region protein 11.